The primary structure comprises 349 residues: Probable G-protein coupled receptor 21 (349 aa).

The Extracellular portion of the chain corresponds to 1–32; that stretch reads MNSTWDGNQSSHPFCLLALGYLETVRFCLLEV. 2 N-linked (GlcNAc...) asparagine glycosylation sites follow: N2 and N8. Residues 33-53 form a helical membrane-spanning segment; that stretch reads LIIVFLTVLIISGNIIVIFVF. At 54-75 the chain is on the cytoplasmic side; that stretch reads HCAPLLNHHSTSYFIQTMAYAD. Residues 76–96 form a helical membrane-spanning segment; sequence LLVGVSCLVPSLSLLYYPLPI. The Extracellular segment spans residues 97 to 104; that stretch reads EEAMTCQV. The chain crosses the membrane as a helical span at residues 105-125; that stretch reads FGFVVSVLKSISMASLACISI. The Cytoplasmic portion of the chain corresponds to 126–147; sequence DRYIAITKPLTYNTLVTPWRLR. Residues 148–168 traverse the membrane as a helical segment; sequence LCIFLIWLYSTLVFLPSFFHW. Over 169-191 the chain is Extracellular; it reads GKPGYHGDVFQWCAESWHTNSYF. A helical transmembrane segment spans residues 192 to 212; that stretch reads TLFIVMMLYAPAALIVCFTYF. Residues 213-252 lie on the Cytoplasmic side of the membrane; that stretch reads NIFRICQQHTKEISERQARFSSQNGETGEPQTCPDKRYAM. The helical transmembrane segment at 253–273 threads the bilayer; sequence VLFRITSVFYVLWLPYIIYFL. Topologically, residues 274–283 are extracellular; the sequence is LESSTGCSSR. A helical transmembrane segment spans residues 284-304; it reads LASFLTTWLAISNSFCNCIIY. Over 305 to 349 the chain is Cytoplasmic; it reads SLSNSVFQRGLKGLSGSLCTSCASHTTAKDPYTVRCKGPPNGSHI.

It belongs to the G-protein coupled receptor 1 family.

The protein localises to the cell membrane. Its function is as follows. Orphan receptor. The chain is Probable G-protein coupled receptor 21 (Gpr21) from Mus musculus (Mouse).